A 171-amino-acid polypeptide reads, in one-letter code: ATP synthase subunit b (171 aa).

A helical membrane pass occupies residues 12-34 (FALNLNLFETNVINLAVVAFGLY).

It belongs to the ATPase B chain family. F-type ATPases have 2 components, F(1) - the catalytic core - and F(0) - the membrane proton channel. F(1) has five subunits: alpha(3), beta(3), gamma(1), delta(1), epsilon(1). F(0) has four main subunits: a(1), b(1), b'(1) and c(10-14). The alpha and beta chains form an alternating ring which encloses part of the gamma chain. F(1) is attached to F(0) by a central stalk formed by the gamma and epsilon chains, while a peripheral stalk is formed by the delta, b and b' chains.

It localises to the cellular thylakoid membrane. In terms of biological role, f(1)F(0) ATP synthase produces ATP from ADP in the presence of a proton or sodium gradient. F-type ATPases consist of two structural domains, F(1) containing the extramembraneous catalytic core and F(0) containing the membrane proton channel, linked together by a central stalk and a peripheral stalk. During catalysis, ATP synthesis in the catalytic domain of F(1) is coupled via a rotary mechanism of the central stalk subunits to proton translocation. Component of the F(0) channel, it forms part of the peripheral stalk, linking F(1) to F(0). This chain is ATP synthase subunit b, found in Prochlorococcus marinus (strain SARG / CCMP1375 / SS120).